Consider the following 977-residue polypeptide: MAPSLRNFNFFHRFSTFLVFSLFSVVSSDDLQVLLKLKSSFADSNLAVFDSWKLNSGIGPCSFIGVTCNSRGNVTEIDLSRRGLSGNFPFDSVCEIQSLEKLSLGFNSLSGIIPSDLKNCTSLKYLDLGNNLFSGAFPEFSSLNQLQFLYLNNSAFSGVFPWKSLRNATSLVVLSLGDNPFDATADFPVEVVSLKKLSWLYLSNCSIAGKIPPAIGDLTELRNLEISDSGLTGEIPSEISKLTNLWQLELYNNSLTGKLPTGFGNLKNLTYLDASTNLLQGDLSELRSLTNLVSLQMFENEFSGEIPLEFGEFKDLVNLSLYTNKLTGSLPQGLGSLADFDFIDASENLLTGPIPPDMCKNGKMKALLLLQNNLTGSIPESYANCLTLQRFRVSENNLNGTVPAGLWGLPKLEIIDIEMNNFEGPITADIKNGKMLGALYLGFNKLSDELPEEIGDTESLTKVELNNNRFTGKIPSSIGKLKGLSSLKMQSNGFSGEIPDSIGSCSMLSDVNMAQNSISGEIPHTLGSLPTLNALNLSDNKLSGRIPESLSSLRLSLLDLSNNRLSGRIPLSLSSYNGSFNGNPGLCSTTIKSFNRCINPSRSHGDTRVFVLCIVFGLLILLASLVFFLYLKKTEKKEGRSLKHESWSIKSFRKMSFTEDDIIDSIKEENLIGRGGCGDVYRVVLGDGKEVAVKHIRCSSTQKNFSSAMPILTEREGRSKEFETEVQTLSSIRHLNVVKLYCSITSDDSSLLVYEYLPNGSLWDMLHSCKKSNLGWETRYDIALGAAKGLEYLHHGYERPVIHRDVKSSNILLDEFLKPRIADFGLAKILQASNGGPESTHVVAGTYGYIAPAEYGYASKVTEKCDVYSFGVVLMELVTGKKPIEAEFGESKDIVNWVSNNLKSKESVMEIVDKKIGEMYREDAVKMLRIAIICTARLPGLRPTMRSVVQMIEDAEPCRLMGIVISKESDVKVKEIS.

Residues 1–28 (MAPSLRNFNFFHRFSTFLVFSLFSVVSS) form the signal peptide. Residues 29–608 (DDLQVLLKLK…NPSRSHGDTR (580 aa)) are Extracellular-facing. 3 LRR repeats span residues 71–95 (RGNV…SVCE), 96–119 (IQSL…DLKN), and 121–145 (TSLK…SLNQ). N73 and N119 each carry an N-linked (GlcNAc...) asparagine glycan. N152 and N167 each carry an N-linked (GlcNAc...) asparagine glycan. 17 LRR repeats span residues 168–194 (ATSL…VVSL), 195–218 (KKLS…IGDL), 219–242 (TELR…ISKL), 244–265 (NLWQ…GFGN), 267–289 (KNLT…LRSL), 290–312 (TNLV…EFGE), 313–337 (FKDL…LGSL), 339–361 (DFDF…MCKN), 362–385 (GKMK…YANC), 386–409 (LTLQ…LWGL), 411–433 (KLEI…IKNG), 434–457 (KMLG…IGDT), 458–481 (ESLT…IGKL), 482–505 (KGLS…IGSC), 507–529 (MLSD…LGSL), 530–553 (PTLN…LSSL), and 555–578 (LSLL…SYNG). Residue N204 is glycosylated (N-linked (GlcNAc...) asparagine). N-linked (GlcNAc...) asparagine glycans are attached at residues N252 and N268. N-linked (GlcNAc...) asparagine glycosylation is present at N318. N373 and N399 each carry an N-linked (GlcNAc...) asparagine glycan. Residues N536 and N577 are each glycosylated (N-linked (GlcNAc...) asparagine). The chain crosses the membrane as a helical span at residues 609–629 (VFVLCIVFGLLILLASLVFFL). Topologically, residues 630-977 (YLKKTEKKEG…ESDVKVKEIS (348 aa)) are cytoplasmic. The Protein kinase domain maps to 666–959 (IKEENLIGRG…QMIEDAEPCR (294 aa)). Residues 672–680 (IGRGGCGDV) and K694 each bind ATP. Catalysis depends on D805, which acts as the Proton acceptor.

The protein belongs to the protein kinase superfamily. Ser/Thr protein kinase family. As to quaternary structure, interacts with PIP1. In terms of tissue distribution, expressed in roots, stems and dry seeds. Expressed at junctions between organs, such as the insertion zones of stamens, petals and sepals, the transition zones of floral stem and pedicel, pedicel and silique, and floral stem and cauline leaves.

It is found in the membrane. The enzyme catalyses L-seryl-[protein] + ATP = O-phospho-L-seryl-[protein] + ADP + H(+). It catalyses the reaction L-threonyl-[protein] + ATP = O-phospho-L-threonyl-[protein] + ADP + H(+). In terms of biological role, plays a role in pattern-triggered immunity (PTI) signaling induced by pathogen-associated molecular patterns (PAMPs). Acts as a receptor for PIP1 defense peptide. PIP1 is an endogenous secreted peptide that acts as elicitor of immune response and positive regulator of defense response. Involved in the control of seed germination speed, in tolerance to oxidative stress and in maintaining seed longevity. The chain is Receptor-like protein kinase 7 from Arabidopsis thaliana (Mouse-ear cress).